The following is a 205-amino-acid chain: Small ribosomal subunit protein uS4 (205 aa).

A compositionally biased stretch (basic residues) spans 1–12; that stretch reads MSKRIQAKHKLD. A disordered region spans residues 1-49; sequence MSKRIQAKHKLDRRMGQNIWGRPKSPVNRREYGPGQHGQRRKGKMSDFG. Residues 94 to 155 enclose the S4 RNA-binding domain; that stretch reads RRLDAVVYRA…SSRQLEIVIV (62 aa).

Belongs to the universal ribosomal protein uS4 family. As to quaternary structure, part of the 30S ribosomal subunit. Contacts protein S5. The interaction surface between S4 and S5 is involved in control of translational fidelity.

One of the primary rRNA binding proteins, it binds directly to 16S rRNA where it nucleates assembly of the body of the 30S subunit. In terms of biological role, with S5 and S12 plays an important role in translational accuracy. The chain is Small ribosomal subunit protein uS4 from Methylobacterium radiotolerans (strain ATCC 27329 / DSM 1819 / JCM 2831 / NBRC 15690 / NCIMB 10815 / 0-1).